Here is a 386-residue protein sequence, read N- to C-terminus: Lipoyl synthase, mitochondrial (386 aa).

Residues Cys-110, Cys-115, Cys-121, Cys-141, Cys-145, Cys-148, and Ser-356 each contribute to the [4Fe-4S] cluster site. One can recognise a Radical SAM core domain in the interval 124–345 (GNDKSKATAT…KEQALEMGFL (222 aa)).

This sequence belongs to the radical SAM superfamily. Lipoyl synthase family. The cofactor is [4Fe-4S] cluster.

The protein resides in the mitochondrion. It carries out the reaction [[Fe-S] cluster scaffold protein carrying a second [4Fe-4S](2+) cluster] + N(6)-octanoyl-L-lysyl-[protein] + 2 oxidized [2Fe-2S]-[ferredoxin] + 2 S-adenosyl-L-methionine + 4 H(+) = [[Fe-S] cluster scaffold protein] + N(6)-[(R)-dihydrolipoyl]-L-lysyl-[protein] + 4 Fe(3+) + 2 hydrogen sulfide + 2 5'-deoxyadenosine + 2 L-methionine + 2 reduced [2Fe-2S]-[ferredoxin]. Its pathway is protein modification; protein lipoylation via endogenous pathway; protein N(6)-(lipoyl)lysine from octanoyl-[acyl-carrier-protein]: step 2/2. Catalyzes the radical-mediated insertion of two sulfur atoms into the C-6 and C-8 positions of the octanoyl moiety bound to the lipoyl domains of lipoate-dependent enzymes, thereby converting the octanoylated domains into lipoylated derivatives. The polypeptide is Lipoyl synthase, mitochondrial (Zygosaccharomyces rouxii (strain ATCC 2623 / CBS 732 / NBRC 1130 / NCYC 568 / NRRL Y-229)).